A 218-amino-acid chain; its full sequence is Copper acquisition factor BIM1 (218 aa).

The N-terminal stretch at 1–19 (MFALKFILITSFIASTALA) is a signal peptide. Residues H20 and H65 each contribute to the Cu(2+) site. 2 cysteine pairs are disulfide-bonded: C40-C144 and C110-C161. N-linked (GlcNAc...) asparagine glycans are attached at residues N87, N91, and N124. D138 is a Cu(2+) binding site. Residues N158 and N170 are each glycosylated (N-linked (GlcNAc...) asparagine). The interval 160 to 194 (TCTDDASRTSNASSTSSGSATATSAAATSSSSGTS) is disordered. The span at 167-194 (RTSNASSTSSGSATATSAAATSSSSGTS) shows a compositional bias: low complexity. S190 carries GPI-anchor amidated serine lipidation. The propeptide at 191–218 (SGTSGAIKEVVGLGALSLALGIAGLIIL) is removed in mature form.

The protein belongs to the X325 family. Requires Cu(2+) as cofactor.

It is found in the cell membrane. Functionally, lytic polysaccharide monooxygenase-like protein that has diverged to biological functions other than polysaccharide degradation since it does not perform oxidative cleavage of polysaccharides. Cell surface-bound protein that functions in the copper-accumulation pathway shared by the CUF1-dependent copper transporter CTR1. Involved in maintaining cell wall integrity during copper deficiency. Binds Cu(2+) with an estimated 1:1 stoichiometry and might serve as an extracellular copper ligand. FRE4 and FRE7 metalloreductases probably function together with CTR1 and BIM1 to liberate the Cu(2+) bound to the BIM1 copper-binding site for subsequent import of Cu(+) into the cell by CTR1, via the reduction of BIM1-bound Cu(2+) to Cu(+) to reduce binding affinity for BIM1 but increase affinity for CTR1. Facilitates copper acquisition in the brain of mammalian hosts and acts as a copper-dependent virulence trait in fungal meningitis. While BIM1 plays a critical role in cryptococcal meningitis, at least in part through its role in copper acquisition, it could play additional roles during copper limitation or as a means to invade and colonize host tissues in the brain, by compromising host carbohydrate integrity via its lytic polysaccharide monooxygenase (LPMO) activity, which has still to be determined. The protein is Copper acquisition factor BIM1 of Cryptococcus neoformans var. neoformans serotype D (strain JEC21 / ATCC MYA-565) (Filobasidiella neoformans).